Here is a 229-residue protein sequence, read N- to C-terminus: Claudin-25 (229 aa).

At 1–10 the chain is on the cytoplasmic side; it reads MAWSFRAKVQ. A helical membrane pass occupies residues 11-31; sequence LGGLLLSLLGWVCSCVTTILP. At 32 to 81 the chain is on the extracellular side; it reads QWKTLNLELNEMETWIMGIWEVCVDREEVATVCKAFESFLSLPQELQVAR. The chain crosses the membrane as a helical span at residues 82–102; it reads ILMVASHGLGLLGLLLCSFGS. Residues 103-124 are Cytoplasmic-facing; the sequence is ECFQFHRIRWVFKRRLGLLGRT. A helical membrane pass occupies residues 125–145; sequence LEASASATTLLPVSWVAHATI. Residues 146 to 164 lie on the Extracellular side of the membrane; that stretch reads QDFWDDSIPDIIPRWEFGG. A helical transmembrane segment spans residues 165–185; it reads ALYLGWAAGIFLALGGLLLIF. The Cytoplasmic portion of the chain corresponds to 186–229; sequence SACLGKEDVPFPLMAGPTVPLSCAPVEESDGSFHLMLRPRNLVI.

This sequence belongs to the claudin family.

It localises to the cell junction. The protein localises to the tight junction. Its subcellular location is the cell membrane. Functionally, plays a major role in tight junction-specific obliteration of the intercellular space, through calcium-independent cell-adhesion activity. The polypeptide is Claudin-25 (CLDN25) (Homo sapiens (Human)).